Here is a 623-residue protein sequence, read N- to C-terminus: UvrABC system protein C (623 aa).

The 80-residue stretch at 12–91 (PSPGVYLMKS…IKQHRPKYNI (80 aa)) folds into the GIY-YIG domain. Positions 201-236 (TEVARLYRSKMNLAAEQMRYEDAARYRDLLRAIEVT) constitute a UVR domain. The interval 603-623 (RLHGSPLPNPPPPGEGAMDRK) is disordered.

It belongs to the UvrC family. As to quaternary structure, interacts with UvrB in an incision complex.

The protein localises to the cytoplasm. Functionally, the UvrABC repair system catalyzes the recognition and processing of DNA lesions. UvrC both incises the 5' and 3' sides of the lesion. The N-terminal half is responsible for the 3' incision and the C-terminal half is responsible for the 5' incision. The protein is UvrABC system protein C of Citrifermentans bemidjiense (strain ATCC BAA-1014 / DSM 16622 / JCM 12645 / Bem) (Geobacter bemidjiensis).